Consider the following 307-residue polypeptide: Oxygen-dependent coproporphyrinogen-III oxidase (307 aa).

Ser99 lines the substrate pocket. A divalent metal cation-binding residues include His103 and His113. His113 (proton donor) is an active-site residue. Residue Asn115–Arg117 participates in substrate binding. A divalent metal cation contacts are provided by His152 and His182. Residues Tyr247–Arg282 form an important for dimerization region. Gly265 to Arg267 is a binding site for substrate.

It belongs to the aerobic coproporphyrinogen-III oxidase family. Homodimer. A divalent metal cation is required as a cofactor.

It localises to the cytoplasm. The catalysed reaction is coproporphyrinogen III + O2 + 2 H(+) = protoporphyrinogen IX + 2 CO2 + 2 H2O. It functions in the pathway porphyrin-containing compound metabolism; protoporphyrin-IX biosynthesis; protoporphyrinogen-IX from coproporphyrinogen-III (O2 route): step 1/1. Functionally, involved in the heme biosynthesis. Catalyzes the aerobic oxidative decarboxylation of propionate groups of rings A and B of coproporphyrinogen-III to yield the vinyl groups in protoporphyrinogen-IX. The sequence is that of Oxygen-dependent coproporphyrinogen-III oxidase from Burkholderia mallei (strain SAVP1).